Here is a 317-residue protein sequence, read N- to C-terminus: Transaldolase (317 aa).

Lys-132 acts as the Schiff-base intermediate with substrate in catalysis.

Belongs to the transaldolase family. Type 1 subfamily. Homodimer.

It localises to the cytoplasm. It catalyses the reaction D-sedoheptulose 7-phosphate + D-glyceraldehyde 3-phosphate = D-erythrose 4-phosphate + beta-D-fructose 6-phosphate. Its pathway is carbohydrate degradation; pentose phosphate pathway; D-glyceraldehyde 3-phosphate and beta-D-fructose 6-phosphate from D-ribose 5-phosphate and D-xylulose 5-phosphate (non-oxidative stage): step 2/3. Its function is as follows. Transaldolase is important for the balance of metabolites in the pentose-phosphate pathway. This Yersinia pseudotuberculosis serotype O:1b (strain IP 31758) protein is Transaldolase.